We begin with the raw amino-acid sequence, 31 residues long: Cyclotide vibi-H (31 aa).

Positions 1–31 (GLLPCAESCVYIPCLTTVIGCSCKSKVCYKN) form a cross-link, cyclopeptide (Gly-Asn). 3 cysteine pairs are disulfide-bonded: Cys-5/Cys-21, Cys-9/Cys-23, and Cys-14/Cys-28.

In terms of processing, this is a cyclic peptide.

In terms of biological role, probably participates in a plant defense mechanism. Has cytotoxic activity, active against a human lymphoma cell line with an IC(50) of 1.6 uM. In Viola biflora (Yellow wood violet), this protein is Cyclotide vibi-H.